The sequence spans 615 residues: Angiotensin-converting enzyme (615 aa).

The signal sequence occupies residues 1-17 (MRLFLLALLATLAVTQA). In terms of domain architecture, Peptidase M2 spans 19 to 607 (VKEEIQAKEY…IKNNVHIGWT (589 aa)). Residue Asn-53 is glycosylated (N-linked (GlcNAc...) asparagine). Cys-133 and Cys-141 are joined by a disulfide. N-linked (GlcNAc...) asparagine glycosylation is found at Asn-196 and Asn-311. A disulfide bridge links Cys-336 with Cys-354. Residue His-367 participates in Zn(2+) binding. The active-site Proton acceptor is the Glu-368. 2 residues coordinate Zn(2+): His-371 and Glu-395. The Proton donor role is filled by His-497. A disulfide bridge links Cys-522 with Cys-540.

It belongs to the peptidase M2 family. It depends on Zn(2+) as a cofactor. Glycosylated. As to expression, expressed in vesicular structures in spermatocytes and early spermatids (at protein level).

The protein resides in the secreted. Its subcellular location is the extracellular space. The enzyme catalyses Release of a C-terminal dipeptide, oligopeptide-|-Xaa-Yaa, when Xaa is not Pro, and Yaa is neither Asp nor Glu. Thus, conversion of angiotensin I to angiotensin II, with increase in vasoconstrictor activity, but no action on angiotensin II.. Its activity is regulated as follows. Inhibited by captopril and, to a lesser extent, by lisinopril, trandolaprilat, fosinoprilat and enalaprilat. Its function is as follows. May be involved in the specific maturation or degradation of a number of bioactive peptides. May play a role in the contractions of the heart, gut and testes, and in spermatid differentiation. In Drosophila melanogaster (Fruit fly), this protein is Angiotensin-converting enzyme (Ance).